The sequence spans 537 residues: MNCSPPGSSTDTERQSSSSGTPVAPRPTLAPTHPLRQANRLPIRLLKMLTAHTGHLLHPEYLQPLSSTPVSPIELDAKKSPLALLAQTCSQIGKPDPPPSSKLNSVTSSGLSEKESGRSSSLKLGESPLEDKSSFKPYSKGGESRKESGSSSGGAADKAGFRVPSGSCQPFPHAPSPSSRVSSPGQHCDSKNNESQEKKEPEANKANSETSQVNPTLTRASTSNSSAESSQSGDVTPISKADPPSLGSGHVAPVSPYKPGHSVFPLPPSGIGYHGSIVGAYAGYPSQFVPGLDHTKTSLVGNQLPGTLGLPGKPPSSSPLTGASPPSFMQGLCRDPYCLSYHNASHLGSSSCSTCVHDPSALKSGYPLVYPSHPLHSVHTTLSSSVTPSLPGHPLYTYGFMLPNDPVPHICNWVSASGPCDKRFSTSEELLAHLRTHTALPGADKLLAGYPTSTLGSAASCHLHLPPAGPGSPNTLPGSLSLRSPHSLGLSRYHPYGKGHLTTPSGLPLPSLPAGSYYSPYALYGQRLTSASALGYQ.

3 disordered regions span residues 1–38 (MNCS…LRQA), 90–254 (SQIG…VAPV), and 300–323 (VGNQ…LTGA). The span at 101–111 (SKLNSVTSSGL) shows a compositional bias: polar residues. Over residues 149–158 (GSSSGGAADK) the composition is skewed to low complexity. The span at 176-185 (SPSSRVSSPG) shows a compositional bias: polar residues. The segment covering 188 to 203 (CDSKNNESQEKKEPEA) has biased composition (basic and acidic residues). Over residues 205–220 (KANSETSQVNPTLTRA) the composition is skewed to polar residues. Low complexity predominate over residues 221 to 232 (STSNSSAESSQS). The C2H2-type zinc finger occupies 409-437 (HICNWVSASGPCDKRFSTSEELLAHLRTH).

Belongs to the Elbow/Noc family.

The protein resides in the nucleus. The protein localises to the cytoplasm. Functionally, transcriptional corepressor which does not bind directly to DNA and may regulate transcription through recruitment of histone deacetylases to gene promoters. Regulates cell adhesion, migration and proliferation. Involved in specification of the lateral neural plate border (NPB). May be required for segmental gene expression during hindbrain development. The polypeptide is Zinc finger protein 703 (znf703) (Xenopus tropicalis (Western clawed frog)).